The primary structure comprises 939 residues: AP-2 complex subunit alpha (939 aa).

A compositionally biased stretch (basic and acidic residues) spans 623–633 (RVPENEIRESK). The tract at residues 623-660 (RVPENEIRESKSPAPTSGPGSVLQNNVHVNNSHSKLNN) is disordered. Residues 635–660 (PAPTSGPGSVLQNNVHVNNSHSKLNN) are compositionally biased toward polar residues.

It belongs to the adapter complexes large subunit family. As to quaternary structure, adaptor protein complex 2 (AP-2) is a heterotetramer composed of two large adaptins (alpha-type and beta-type subunits), a medium adaptin (mu-type subunit AP50) and a small adaptin (sigma-type subunit AP17).

Its subcellular location is the cell membrane. It localises to the membrane. It is found in the coated pit. Functionally, adaptins are components of the adapter complexes which link clathrin to receptors in coated vesicles. Clathrin-associated protein complexes are believed to interact with the cytoplasmic tails of membrane proteins, leading to their selection and concentration. Alpha adaptin is a subunit of the plasma membrane adapter. This chain is AP-2 complex subunit alpha, found in Drosophila pseudoobscura pseudoobscura (Fruit fly).